A 288-amino-acid chain; its full sequence is Glucose-1-phosphate thymidylyltransferase (288 aa).

Glycine 8 provides a ligand contact to dTDP-alpha-D-glucose. Glycine 8, glycine 11, threonine 12, arginine 13, lysine 23, glutamine 24, glutamine 80, glycine 85, and aspartate 108 together coordinate dTTP. DTDP-alpha-D-glucose-binding residues include lysine 23, glutamine 24, glutamine 80, glycine 85, aspartate 108, asparagine 109, glycine 143, glutamate 158, lysine 159, valine 169, and aspartate 222. A Mg(2+)-binding site is contributed by aspartate 108. Aspartate 222 serves as a coordination point for Mg(2+).

It belongs to the glucose-1-phosphate thymidylyltransferase family. It depends on Mg(2+) as a cofactor.

It catalyses the reaction dTTP + alpha-D-glucose 1-phosphate + H(+) = dTDP-alpha-D-glucose + diphosphate. Its pathway is carbohydrate biosynthesis; dTDP-L-rhamnose biosynthesis. Its function is as follows. Catalyzes the conversion of glucose-1-phosphate and dTTP to dTDP-glucose and pyrophosphate. Involved in the biosynthesis of the dTDP-L-rhamnose which is a component of the critical linker, D-N-acetylglucosamine-L-rhamnose disaccharide, which connects the galactan region of arabinogalactan to peptidoglycan via a phosphodiester linkage. The sequence is that of Glucose-1-phosphate thymidylyltransferase (rmlA) from Mycolicibacterium smegmatis (strain ATCC 700084 / mc(2)155) (Mycobacterium smegmatis).